Consider the following 120-residue polypeptide: Fumarate reductase subunit D (120 aa).

3 helical membrane passes run Phe25–Leu45, Gly57–Trp77, and Ile100–Ile120.

This sequence belongs to the FrdD family. Part of an enzyme complex containing four subunits: a flavoprotein (FrdA), an iron-sulfur protein (FrdB), and two hydrophobic anchor proteins (FrdC and FrdD).

The protein resides in the cell inner membrane. Functionally, anchors the catalytic components of the fumarate reductase complex to the cell membrane, binds quinones. The polypeptide is Fumarate reductase subunit D (Photobacterium profundum (strain SS9)).